The primary structure comprises 209 residues: Orotate phosphoribosyltransferase (209 aa).

Residues R96, K100, H102, and 122 to 130 (EDLISTGGS) contribute to the 5-phospho-alpha-D-ribose 1-diphosphate site. An orotate-binding site is contributed by S126.

This sequence belongs to the purine/pyrimidine phosphoribosyltransferase family. PyrE subfamily. As to quaternary structure, homodimer. Mg(2+) serves as cofactor.

The enzyme catalyses orotidine 5'-phosphate + diphosphate = orotate + 5-phospho-alpha-D-ribose 1-diphosphate. The protein operates within pyrimidine metabolism; UMP biosynthesis via de novo pathway; UMP from orotate: step 1/2. Catalyzes the transfer of a ribosyl phosphate group from 5-phosphoribose 1-diphosphate to orotate, leading to the formation of orotidine monophosphate (OMP). In Cytophaga hutchinsonii (strain ATCC 33406 / DSM 1761 / CIP 103989 / NBRC 15051 / NCIMB 9469 / D465), this protein is Orotate phosphoribosyltransferase.